Consider the following 406-residue polypeptide: Protein phosphatase 2C (406 aa).

The region spanning 23 to 274 is the PPM-type phosphatase domain; sequence RCGSNCVNGY…DNISCMIVQF (252 aa). Residues Asp-55, Gly-56, Asp-221, and Asp-265 each coordinate Mn(2+).

The protein belongs to the PP2C family. As to quaternary structure, monomer. It depends on Mg(2+) as a cofactor. Mn(2+) is required as a cofactor.

The enzyme catalyses O-phospho-L-seryl-[protein] + H2O = L-seryl-[protein] + phosphate. The catalysed reaction is O-phospho-L-threonyl-[protein] + H2O = L-threonyl-[protein] + phosphate. In terms of biological role, enzyme with a broad specificity. The protein is Protein phosphatase 2C of Leishmania chagasi.